Consider the following 1444-residue polypeptide: MGDGLDAVQMSGSSSSQGQPSSQAPSSFNPNPPETSNPTRPKRQTNQLQYLLKVVLKSLWKHQFAWPFHAPVDAVKLNLPDYYKIIKNPMDMGTIKKRLESAFYTSAQECIQDFNTMFTNCYIYNKPGDDIVLMAEALEKVFLTKISEMPQQEVEISTTAGKGRGRGRRDPDMNMKVGPVLEPLTASPQTRGLSNLTPGPQTRGPPQGPPTLPPQPIVQIQALPPRVPPSLPTIPLHAPQLGPPFSLGPTDCNPPAPIITAVPPPTQTALPPVHIQQSAAPPILQTPISIPNKRKSQKRKADTTTPTANDQLNESSPAESKSGKTLPRRDNTRPSKLPKKEAPDSQHHWTAAPGTPSPKQQEQLRYCSGIVKDMFAKKHAAYAWPFYKPVDVDTLGLHDYHDIIKHPMDLSTIKDKLETRQYREAQEFAADVRLMFSNCYKYNPPDHEVVAMARKLQDVFEMRFAKMPDEPEEMLAPAPAPVLHPAPVKTQPVMATASSSDTSSDSSSESESSTDDSEEERAQRLAELQEQLKAVHEQLAALSQPQASKPKKKEKEKKEKKKDKHKKKAGVMPALEEILEPPPALKPQGKPKNKDPLPKKSKKLSKKEGGKSNRSMAPPGAAPPTLQPVPGLDTEEDLGLTGGAAMAGMAAGEKCKPMSYEEKRQLSLDINKLPGDKLGRVVHIIQSREPSLKNSNPDEIEIDFETLKPSTLRELERYVSSCLRKKKKPAVPEKSMEAISAVKTKGTSSDSGSSSESSSSESEDSETGMASKPKKRGRGEGKKAHHQTTAPGMPLPQVPLQPQTPALQPSIQLKQQQPQHPSPAAYMPPPVTALEPSQLLENPFDPLAHFMHLPHHANDSSSPAPPHLNAHPPGGPVSPETHPFLNQHPILPSPALHNALPQQPSRPSNRAAPLPPKPLQQSTSQQQPPPQQTLVPPQQLQPQQQQPAPPQQQHLPHHPLHAPQQMRPRPLSPPTLTPQGLLSSQPPQMLLEDDEEPVPSMSLPMYLQHLQPNRLQATPTSLMQSLQSRPQPPGQPSLLQSVQVQSHLPPPQLPVQTQVQPQQPAPHQPSPQLSQHQARHMQQLGFPQGPLQTAQTQPGQHKVSMPSTKAQQIIQQQQATQHHSPRQHKADSYNSAHLRDNPSPLMMHSPQIPQYSLVHQSPSQDKKEPQRGPSALGGIKEEKLPPSPVMRGEPFSPAMRPESHKHPDSKPTMPGHSQQRADMKPLEMSRPVIRSSEQSGPPPSMQDKEKFKQEPKTPSAPKKVQDVKFKNMGSWASLAQKSSTTPSSGLKSSSDSFEQFRRAAREKEEREKALKAQVEQAEKDRLRKEQEKLRGRDEEDSIEPPRRPLEEPRRRQEPQQVQPPPQQHQTQAQAQTLNPAQSPSASQPTQAPPQSPASSQSALDQQREMARRREQERRRREAMAATIDMNFQSDLMAIFEENLF.

7 disordered regions span residues 1–44 (MGDG…PKRQ), 154–217 (VEIS…PQPI), 279–362 (AAPP…KQQE), 492–523 (PVMA…ERAQ), 540–645 (AALS…GGAA), 722–986 (CLRK…SSQP), and 1020–1422 (TSLM…RREA). Residues 11-27 (SGSSSSQGQPSSQAPSS) show a composition bias toward low complexity. The 107-residue stretch at 43–149 (RQTNQLQYLL…KVFLTKISEM (107 aa)) folds into the Bromo 1 domain. The segment covering 186-196 (ASPQTRGLSNL) has biased composition (polar residues). Over residues 206 to 216 (PQGPPTLPPQP) the composition is skewed to pro residues. Over residues 303–319 (TTTPTANDQLNESSPAE) the composition is skewed to polar residues. Residues 327–347 (PRRDNTRPSKLPKKEAPDSQH) show a composition bias toward basic and acidic residues. One can recognise a Bromo 2 domain in the interval 358–467 (PKQQEQLRYC…DVFEMRFAKM (110 aa)). Low complexity predominate over residues 498–511 (SSSDTSSDSSSESE). An NPS region region spans residues 498-517 (SSSDTSSDSSSESESSTDDS). A BID region region spans residues 538–610 (QLAALSQPQA…SKKLSKKEGG (73 aa)). Basic residues predominate over residues 549 to 569 (KPKKKEKEKKEKKKDKHKKKA). An NET domain is found at 633–730 (DTEEDLGLTG…SCLRKKKKPA (98 aa)). Low complexity-rich tracts occupy residues 746–760 (GTSS…SSSS), 800–823 (LQPQ…HPSP), 919–954 (LQQS…QQQH), and 1036–1046 (PSLLQSVQVQS). Residues 1090–1109 (PLQTAQTQPGQHKVSMPSTK) show a composition bias toward polar residues. Residues 1110–1121 (AQQIIQQQQATQ) show a composition bias toward low complexity. Residues 1126–1444 (RQHKADSYNS…LMAIFEENLF (319 aa)) are C-terminal (CTD) region. Polar residues predominate over residues 1151–1163 (QIPQYSLVHQSPS). A compositionally biased stretch (basic and acidic residues) spans 1246–1255 (QDKEKFKQEP). Residues 1282–1296 (SSTTPSSGLKSSSDS) show a composition bias toward low complexity. The segment covering 1298-1357 (EQFRRAAREKEEREKALKAQVEQAEKDRLRKEQEKLRGRDEEDSIEPPRRPLEEPRRRQE) has biased composition (basic and acidic residues). Residues 1367–1389 (QHQTQAQAQTLNPAQSPSASQPT) are compositionally biased toward low complexity. Residues 1405–1422 (QQREMARRREQERRRREA) are compositionally biased toward basic and acidic residues.

Belongs to the BET family. In terms of tissue distribution, widely expressed.

The protein localises to the nucleus. It localises to the chromosome. Its function is as follows. Chromatin reader protein that recognizes and binds acetylated histones and plays a key role in transmission of epigenetic memory across cell divisions and transcription regulation. Remains associated with acetylated chromatin throughout the entire cell cycle and provides epigenetic memory for postmitotic G1 gene transcription by preserving acetylated chromatin status and maintaining high-order chromatin structure. During interphase, plays a key role in regulating the transcription of signal-inducible genes by associating with the P-TEFb complex and recruiting it to promoters. This is Bromodomain-containing protein 4 (brd4) from Danio rerio (Zebrafish).